Here is a 372-residue protein sequence, read N- to C-terminus: MAFVDEAKFFVKAGDGGNGCVSFRREKFVPKGGPNGGDGGKGGDVIMVASSKVQSLIDFRYRSHFKAERGVHGQGRDMHGRGGKDCYMDIPVGSVVKDSETGRVLADLSEEGEEFVVAQGGSGGMGNPHFSSGSNRTPRVATKGKLGEEKWLLIELKLMADVGLVGLPNAGKSTLLSKLSAANPKVADYPFTTLEPQLGMLHFPMRNSCIIADIPGLVEGAHQGVGLGHKFLRHVERTKILVHVIDASADDPFSDYDIIGNELRSYKEELADRAKILVLNKCDEFDFDKDLLPDFIEARGLEPKNVLFISAITGEGVDKLVKLIGDIIDDMEYQELKQKREEERLQDLKKQKEEERRQELKKQKEEEQAKDE.

An Obg domain is found at M1–M159. The interval G121 to A141 is disordered. Residues A160–D329 enclose the OBG-type G domain. GTP contacts are provided by residues G166–S173, F191–E195, D213–G216, N280–D283, and S310–I312. Positions 173 and 193 each coordinate Mg(2+). A disordered region spans residues Q346–E372.

The protein belongs to the TRAFAC class OBG-HflX-like GTPase superfamily. OBG GTPase family. Monomer. Mg(2+) serves as cofactor.

The protein localises to the cytoplasm. Its function is as follows. An essential GTPase which binds GTP, GDP and possibly (p)ppGpp with moderate affinity, with high nucleotide exchange rates and a fairly low GTP hydrolysis rate. Plays a role in control of the cell cycle, stress response, ribosome biogenesis and in those bacteria that undergo differentiation, in morphogenesis control. The sequence is that of GTPase Obg from Desulfotalea psychrophila (strain LSv54 / DSM 12343).